We begin with the raw amino-acid sequence, 93 residues long: Small ribosomal subunit protein uS19 (93 aa).

This sequence belongs to the universal ribosomal protein uS19 family.

In terms of biological role, protein S19 forms a complex with S13 that binds strongly to the 16S ribosomal RNA. This is Small ribosomal subunit protein uS19 from Acidothermus cellulolyticus (strain ATCC 43068 / DSM 8971 / 11B).